We begin with the raw amino-acid sequence, 434 residues long: Isocitrate lyase (434 aa).

Substrate is bound at residue 91–93; the sequence is SGW. D157 is a binding site for Mg(2+). C195 functions as the Proton acceptor in the catalytic mechanism. Substrate-binding positions include 196–197, R232, 317–321, and T351; these read GH and NCSPS.

It belongs to the isocitrate lyase/PEP mutase superfamily. Isocitrate lyase family. As to quaternary structure, homotetramer. Mg(2+) is required as a cofactor.

The enzyme catalyses D-threo-isocitrate = glyoxylate + succinate. It participates in carbohydrate metabolism; glyoxylate cycle; (S)-malate from isocitrate: step 1/2. Involved in the metabolic adaptation in response to environmental changes. Catalyzes the reversible formation of succinate and glyoxylate from isocitrate, a key step of the glyoxylate cycle, which operates as an anaplerotic route for replenishing the tricarboxylic acid cycle during growth on fatty acid substrates. This Salmonella typhimurium (strain LT2 / SGSC1412 / ATCC 700720) protein is Isocitrate lyase (aceA).